Consider the following 163-residue polypeptide: MTEAAKPPTIPELEAQERRLTLPHFTYDDAWAFGNLLVELARRRCAPVAVDIRRGGQQLFHAALPGSTPDNDAWIDRKRRVVERYGSSSYLVGCRFRAKGTTFEESSRLDPDKYAAHGGAFPITVEGAGVVGTVVVSGLPQVEDHALVVEALEQFMTRPWSSS.

The protein belongs to the UPF0303 family.

This Streptomyces avermitilis (strain ATCC 31267 / DSM 46492 / JCM 5070 / NBRC 14893 / NCIMB 12804 / NRRL 8165 / MA-4680) protein is UPF0303 protein SAV_5210.